The primary structure comprises 931 residues: Bifunctional glutamine synthetase adenylyltransferase/adenylyl-removing enzyme (931 aa).

Positions 1–434 (MTLAPADLPV…STEFAALLAP (434 aa)) are adenylyl removase. An adenylyl transferase region spans residues 441–931 (PDALANYWRS…ACRAAELPFA (491 aa)).

This sequence belongs to the GlnE family. The cofactor is Mg(2+).

The enzyme catalyses [glutamine synthetase]-O(4)-(5'-adenylyl)-L-tyrosine + phosphate = [glutamine synthetase]-L-tyrosine + ADP. It catalyses the reaction [glutamine synthetase]-L-tyrosine + ATP = [glutamine synthetase]-O(4)-(5'-adenylyl)-L-tyrosine + diphosphate. Its function is as follows. Involved in the regulation of glutamine synthetase GlnA, a key enzyme in the process to assimilate ammonia. When cellular nitrogen levels are high, the C-terminal adenylyl transferase (AT) inactivates GlnA by covalent transfer of an adenylyl group from ATP to specific tyrosine residue of GlnA, thus reducing its activity. Conversely, when nitrogen levels are low, the N-terminal adenylyl removase (AR) activates GlnA by removing the adenylyl group by phosphorolysis, increasing its activity. The regulatory region of GlnE binds the signal transduction protein PII (GlnB) which indicates the nitrogen status of the cell. The polypeptide is Bifunctional glutamine synthetase adenylyltransferase/adenylyl-removing enzyme (Stenotrophomonas maltophilia (strain K279a)).